The chain runs to 168 residues: Ribosome maturation factor RimM (168 aa).

The PRC barrel domain occupies 97–168 (PNEYYYYELL…RLVVKVPEWI (72 aa)).

It belongs to the RimM family. As to quaternary structure, binds ribosomal protein uS19.

It is found in the cytoplasm. Its function is as follows. An accessory protein needed during the final step in the assembly of 30S ribosomal subunit, possibly for assembly of the head region. Essential for efficient processing of 16S rRNA. May be needed both before and after RbfA during the maturation of 16S rRNA. It has affinity for free ribosomal 30S subunits but not for 70S ribosomes. The polypeptide is Ribosome maturation factor RimM (Pseudothermotoga lettingae (strain ATCC BAA-301 / DSM 14385 / NBRC 107922 / TMO) (Thermotoga lettingae)).